The sequence spans 73 residues: Antimicrobial peptide lumbricin-PG (73 aa).

An N-terminal signal peptide occupies residues 1–14; sequence MLLTISDFLFLSLT. The interval 25–48 is disordered; the sequence is RPWSDRKNNYSGPQFTYPPEKAPP.

Its subcellular location is the secreted. Functionally, displays antimicrobial activity against the Gram-positive bacterium S.aureus ATCC 2592, the Gram-negative bacteria E.coli ATCC 25922 and P.aeruginosa ATCC 27853, and the fungus C.albicans ATCC 2002. Displays stronger activity against P.aeruginosa and S.aureus than E.coli. Displays very weak hemolytic activity. This chain is Antimicrobial peptide lumbricin-PG, found in Metaphire guillelmi (Earthworm).